Consider the following 75-residue polypeptide: Large ribosomal subunit protein bL32c (75 aa).

The segment at 49 to 75 (SPGPTTPIKPNPKKQTGRRPRSQRRRT) is disordered. Positions 59-75 (NPKKQTGRRPRSQRRRT) are enriched in basic residues.

This sequence belongs to the bacterial ribosomal protein bL32 family.

It localises to the plastid. The protein localises to the chloroplast. This chain is Large ribosomal subunit protein bL32c, found in Nephroselmis olivacea (Green alga).